We begin with the raw amino-acid sequence, 95 residues long: Integration host factor subunit beta (95 aa).

It belongs to the bacterial histone-like protein family. In terms of assembly, heterodimer of an alpha and a beta chain.

Functionally, this protein is one of the two subunits of integration host factor, a specific DNA-binding protein that functions in genetic recombination as well as in transcriptional and translational control. The sequence is that of Integration host factor subunit beta from Shewanella amazonensis (strain ATCC BAA-1098 / SB2B).